The primary structure comprises 206 residues: Ribosomal RNA small subunit methyltransferase G (206 aa).

Residues G71, F76, 122-123 (AE), and R135 each bind S-adenosyl-L-methionine.

The protein belongs to the methyltransferase superfamily. RNA methyltransferase RsmG family.

Its subcellular location is the cytoplasm. Specifically methylates the N7 position of a guanine in 16S rRNA. This chain is Ribosomal RNA small subunit methyltransferase G, found in Bacteroides fragilis (strain ATCC 25285 / DSM 2151 / CCUG 4856 / JCM 11019 / LMG 10263 / NCTC 9343 / Onslow / VPI 2553 / EN-2).